The sequence spans 249 residues: tRNA pseudouridine synthase A (249 aa).

The Nucleophile role is filled by aspartate 53. Tyrosine 111 is a binding site for substrate.

The protein belongs to the tRNA pseudouridine synthase TruA family. As to quaternary structure, homodimer.

It carries out the reaction uridine(38/39/40) in tRNA = pseudouridine(38/39/40) in tRNA. Its function is as follows. Formation of pseudouridine at positions 38, 39 and 40 in the anticodon stem and loop of transfer RNAs. This Streptococcus pyogenes serotype M1 protein is tRNA pseudouridine synthase A.